The sequence spans 614 residues: Replication protein A 70 kDa DNA-binding subunit (614 aa).

The disordered stretch occupies residues 112-178 (GNPVPYNEGQ…SSVKTPGGTQ (67 aa)). 2 stretches are compositionally biased toward polar residues: residues 120-130 (GQGQQRSSAPT) and 158-178 (PSNQ…GGTQ). The OB DNA-binding region spans 194–278 (WTICARVTQK…VKNDYEITFN (85 aa)). The C4-type zinc-finger motif lies at 478–500 (CPSQDCNKKVIDQQNGLYRCEKC).

The protein belongs to the replication factor A protein 1 family. In terms of assembly, component of the heterotrimeric canonical replication protein A complex (RPA).

The protein localises to the nucleus. It is found in the PML body. In terms of biological role, as part of the heterotrimeric replication protein A complex (RPA/RP-A), binds and stabilizes single-stranded DNA intermediates, that form during DNA replication or upon DNA stress. It prevents their reannealing and in parallel, recruits and activates different proteins and complexes involved in DNA metabolism. Thereby, it plays an essential role both in DNA replication and the cellular response to DNA damage. The polypeptide is Replication protein A 70 kDa DNA-binding subunit (RPA1) (Gallus gallus (Chicken)).